The primary structure comprises 312 residues: Olfactory receptor 6C68 (312 aa).

The Extracellular portion of the chain corresponds to 1 to 23; that stretch reads MRKHTAITTFILLGLTEDPQLQV. The helical transmembrane segment at 24-44 threads the bilayer; the sequence is LLFMFLFITYMLSVTGKLTII. The Cytoplasmic portion of the chain corresponds to 45–55; it reads ALTMLDPHLKT. Residues 56-76 form a helical membrane-spanning segment; sequence PMYFFLQNLSFLEISFTATCV. The Extracellular portion of the chain corresponds to 77-95; it reads PRFLYSISTGNKIITYNAC. A disulfide bridge links Cys-95 with Cys-177. The helical transmembrane segment at 96–116 threads the bilayer; the sequence is VIQLFFADLFGVTEFFLLATM. Over 117 to 143 the chain is Cytoplasmic; that stretch reads SYDRYVAICKPLHYMAIMSNKVCKTMV. A helical membrane pass occupies residues 144–164; that stretch reads ICCWMAALMIILPPLSLGFHL. Residues 165 to 197 lie on the Extracellular side of the membrane; it reads EFCDSNVINHFGCDALPILKIPCSDTSLIEQMV. A helical membrane pass occupies residues 198-218; that stretch reads VASAVLTFIITLVCVVLSYTY. Topologically, residues 219–239 are cytoplasmic; it reads IIRTILKFPSVQQKKKAFSTC. A helical transmembrane segment spans residues 240 to 260; it reads SSHITVVSITYGSCIFIYIKP. The Extracellular portion of the chain corresponds to 261-271; sequence SAKEEVNINKG. Residues 272–292 form a helical membrane-spanning segment; that stretch reads VSVLISSISPMLNSFIYTLRN. Over 293–312 the chain is Cytoplasmic; it reads EQVKQAFHDSLKKIAFRLKK.

This sequence belongs to the G-protein coupled receptor 1 family.

The protein resides in the cell membrane. In terms of biological role, odorant receptor. The chain is Olfactory receptor 6C68 (OR6C68) from Homo sapiens (Human).